Consider the following 378-residue polypeptide: Pre-B-cell leukemia transcription factor 4 (378 aa).

Residues 1–15 are compositionally biased toward pro residues; it reads MAAPLRPVPPQPAPR. Disordered regions lie at residues 1 to 24 and 100 to 125; these read MAAP…APLG and VSRP…PNDN. The PBC domain occupies 22–214; sequence PLGHDTSDVL…VMTLRSRFLD (193 aa). The PBC-A stretch occupies residues 29–107; the sequence is DVLQQIMAIT…EGVSRPEKRG (79 aa). Over residues 109–120 the composition is skewed to low complexity; the sequence is GAAAGSTATPGG. The interval 110-214 is PBC-B; the sequence is AAAGSTATPG…VMTLRSRFLD (105 aa). The segment at residues 215–277 is a DNA-binding region (homeobox; TALE-type); sequence ARRKRRNFSK…NKRIRYKKNT (63 aa). Disordered regions lie at residues 291–320 and 355–378; these read ASTV…PLPL and RAAP…AASN. A compositionally biased stretch (low complexity) spans 356–370; that stretch reads AAPQPASSPAGESGS.

Belongs to the TALE/PBX homeobox family. As to expression, almost exclusively expressed in testis.

The protein resides in the nucleus. The polypeptide is Pre-B-cell leukemia transcription factor 4 (Pbx4) (Mus musculus (Mouse)).